The primary structure comprises 97 residues: Stefin-1 (97 aa).

The short motif at 46 to 50 (QVVAG) is the Secondary area of contact element.

Belongs to the cystatin family.

The protein localises to the cytoplasm. Functionally, this is an intracellular thiol proteinase inhibitor. The polypeptide is Stefin-1 (Stfa1) (Mus musculus (Mouse)).